Consider the following 337-residue polypeptide: Phosphate acyltransferase (337 aa).

Belongs to the PlsX family. In terms of assembly, homodimer. Probably interacts with PlsY.

It is found in the cytoplasm. It catalyses the reaction a fatty acyl-[ACP] + phosphate = an acyl phosphate + holo-[ACP]. Its pathway is lipid metabolism; phospholipid metabolism. Its function is as follows. Catalyzes the reversible formation of acyl-phosphate (acyl-PO(4)) from acyl-[acyl-carrier-protein] (acyl-ACP). This enzyme utilizes acyl-ACP as fatty acyl donor, but not acyl-CoA. The protein is Phosphate acyltransferase of Polynucleobacter asymbioticus (strain DSM 18221 / CIP 109841 / QLW-P1DMWA-1) (Polynucleobacter necessarius subsp. asymbioticus).